The primary structure comprises 359 residues: 3-dehydroquinate synthase (359 aa).

NAD(+) contacts are provided by residues 69–74 (DGEAYK), 103–107 (GVIGD), 127–128 (TT), K140, K149, and 167–170 (CLKT). Zn(2+) contacts are provided by E182, H245, and H262.

It belongs to the sugar phosphate cyclases superfamily. Dehydroquinate synthase family. Requires Co(2+) as cofactor. The cofactor is Zn(2+). NAD(+) serves as cofactor.

It localises to the cytoplasm. It carries out the reaction 7-phospho-2-dehydro-3-deoxy-D-arabino-heptonate = 3-dehydroquinate + phosphate. It functions in the pathway metabolic intermediate biosynthesis; chorismate biosynthesis; chorismate from D-erythrose 4-phosphate and phosphoenolpyruvate: step 2/7. Functionally, catalyzes the conversion of 3-deoxy-D-arabino-heptulosonate 7-phosphate (DAHP) to dehydroquinate (DHQ). The chain is 3-dehydroquinate synthase from Aeromonas salmonicida (strain A449).